A 178-amino-acid polypeptide reads, in one-letter code: Ribosome maturation factor RimM (178 aa).

In terms of domain architecture, PRC barrel spans 101-178 (ADEYYWYQLV…VMRVEWDADF (78 aa)).

It belongs to the RimM family. Binds ribosomal protein uS19.

It localises to the cytoplasm. Functionally, an accessory protein needed during the final step in the assembly of 30S ribosomal subunit, possibly for assembly of the head region. Essential for efficient processing of 16S rRNA. May be needed both before and after RbfA during the maturation of 16S rRNA. It has affinity for free ribosomal 30S subunits but not for 70S ribosomes. This chain is Ribosome maturation factor RimM, found in Pseudomonas putida (strain GB-1).